Reading from the N-terminus, the 185-residue chain is Ribosome-recycling factor (185 aa).

It belongs to the RRF family.

The protein localises to the cytoplasm. Responsible for the release of ribosomes from messenger RNA at the termination of protein biosynthesis. May increase the efficiency of translation by recycling ribosomes from one round of translation to another. The polypeptide is Ribosome-recycling factor (Aeromonas hydrophila subsp. hydrophila (strain ATCC 7966 / DSM 30187 / BCRC 13018 / CCUG 14551 / JCM 1027 / KCTC 2358 / NCIMB 9240 / NCTC 8049)).